Consider the following 71-residue polypeptide: Mitotic-spindle organizing protein 1B (71 aa).

It belongs to the MOZART1 family. In terms of assembly, homo- and heteromultimer. Part of the gamma-tubulin complex. Interacts with TUBB2/TUBB3, GIP2, GCP3 and TSA1 (via C-terminal domain). In terms of tissue distribution, mostly expressed in siliques and flowers, and, to a lower extent, in leaves, roots and seedlings, with highest levels in young tissues and meristematic cells, and the vasculature.

It localises to the cytoplasm. Its subcellular location is the cytoskeleton. The protein localises to the microtubule organizing center. It is found in the spindle. The protein resides in the nucleus. It localises to the phragmoplast. Its subcellular location is the nucleus envelope. In terms of biological role, required for gamma-tubulin complex recruitment to the microtubule organizing centers (MTOCs). During mitosis, modulates gamma-tubulin complex localization, spindle stability and chromosomal segregation. Necessary for gametophyte development and embryogenesis. The chain is Mitotic-spindle organizing protein 1B (GIP1) from Arabidopsis thaliana (Mouse-ear cress).